The chain runs to 111 residues: MCAKPNHLFVTVTFIFGFAVCIVQISAWTSIGKIAIKDGKCDPKNGKLYSIGEKWHNNEDCFEITCIQGNKGTVAQQVTSCPVHAMKTGCKLKFPKGEFPNCCPFYDCSKN.

Residues 1–28 (MCAKPNHLFVTVTFIFGFAVCIVQISAW) form the signal peptide.

This sequence belongs to the scoloptoxin-16 family. Post-translationally, contains 4 disulfide bonds. In terms of tissue distribution, expressed by the venom gland.

The protein localises to the secreted. The chain is U-scoloptoxin(16)-Sm2a from Scolopendra morsitans (Tanzanian blue ringleg centipede).